A 428-amino-acid polypeptide reads, in one-letter code: Histidine--tRNA ligase (428 aa).

It belongs to the class-II aminoacyl-tRNA synthetase family.

Its subcellular location is the cytoplasm. The catalysed reaction is tRNA(His) + L-histidine + ATP = L-histidyl-tRNA(His) + AMP + diphosphate + H(+). This Korarchaeum cryptofilum (strain OPF8) protein is Histidine--tRNA ligase.